The sequence spans 574 residues: Egalitarian protein homolog (574 aa).

The segment at 259–278 (LNEDGSENGSDEGEETNNNG) is disordered. The segment covering 262-273 (DGSENGSDEGEE) has biased composition (acidic residues). In terms of domain architecture, 3'-5' exonuclease spans 312 to 414 (NMEKKVVGLD…SLLQHEKFNK (103 aa)).

As to quaternary structure, component of a dynein-regulating complex composed of at least bicd-1, dlc-1 and egal-1.

It is found in the nucleus envelope. Part of a complex with bicd-1 and dlc-1, which is recruited to the nuclear envelope by unc-83, where in turn, it recruits dynein to the nuclear surface and regulates nuclear migration in hypodermal precursor cells. The sequence is that of Egalitarian protein homolog from Caenorhabditis elegans.